The following is a 186-amino-acid chain: C-type lectin 37Da (186 aa).

A signal peptide spans 1-20 (MLKTLVQLFLVVAGFAPGFG). N-linked (GlcNAc...) asparagine glycosylation is found at Asn-35 and Asn-47. A C-type lectin domain is found at 46-169 (INESYYVFGQ…CHNHASSLFK (124 aa)). Cys-140 and Cys-160 form a disulfide bridge.

The protein localises to the secreted. Its function is as follows. Galactose-specific lectin that displays calcium-dependent activity. Binds to the surface of hemocytes and enhances hemocyte encapsulation and melanization. This is likely by interacting with carbohydrates on the surface of the hemocytes. Also displays agglutination activity against the Gram-negative bacterium E.coli. The polypeptide is C-type lectin 37Da (Drosophila melanogaster (Fruit fly)).